The following is an 846-amino-acid chain: Protein IRS1 (846 aa).

4 disordered regions span residues 1 to 82 (MAQR…NFWH), 366 to 385 (TGTAAGTTSPPAASGTETEA), 606 to 626 (WLMEQPPPPSRQTKPDAATMP), and 714 to 846 (QVIP…HVHH). Positions 16–25 (RGRGAGGPSG) are enriched in gly residues. The segment covering 26-56 (VGSSPPSSCVPMGAPSTAGTGASAAATTTPG) has biased composition (low complexity). The span at 722–732 (EPEDDDEDPTY) shows a compositional bias: acidic residues. Positions 832–846 (RPKKCQTHAPHHVHH) are enriched in basic residues.

It belongs to the herpesviridae US22 family. In terms of assembly, interacts (via N-terminus) with the viral DNA polymerase accessory subunit UL44. Interacts (via C-terminus) with host EIF2AK2/PKR.

It localises to the virion. The protein localises to the host cytoplasm. The protein resides in the host nucleus. In terms of biological role, inhibits the establishment of the antiviral state in the infected cell. Prevents the phosphorylation of the host eukaryotic translation initiation factor eIF-2alpha and thus the shutoff of viral and cellular protein synthesis by directly interacting with EIF2AK2/PKR. May also participate in viral DNA replication by interacting with the DNA polymerase accessory protein and the lytic origin of replication, oriLyt. This chain is Protein IRS1 (IRS1), found in Homo sapiens (Human).